A 236-amino-acid chain; its full sequence is OPEP-2 protein (236 aa).

The protein is OPEP-2 protein (OPEP-2) of Orgyia pseudotsugata (Douglas-fir tussock moth).